The sequence spans 459 residues: Diaminopimelate decarboxylase (459 aa).

The residue at position 89 (lysine 89) is an N6-(pyridoxal phosphate)lysine. Residues glycine 271 and 313 to 316 contribute to the pyridoxal 5'-phosphate site; that span reads EPGR. Residues arginine 316, arginine 357, and tyrosine 361 each contribute to the substrate site. Cysteine 388 serves as the catalytic Proton donor. Substrate contacts are provided by glutamate 389 and tyrosine 418. Tyrosine 418 is a pyridoxal 5'-phosphate binding site.

Belongs to the Orn/Lys/Arg decarboxylase class-II family. LysA subfamily. As to quaternary structure, homodimer. Pyridoxal 5'-phosphate serves as cofactor.

The enzyme catalyses meso-2,6-diaminopimelate + H(+) = L-lysine + CO2. The protein operates within amino-acid biosynthesis; L-lysine biosynthesis via DAP pathway; L-lysine from DL-2,6-diaminopimelate: step 1/1. Specifically catalyzes the decarboxylation of meso-diaminopimelate (meso-DAP) to L-lysine. The chain is Diaminopimelate decarboxylase from Corynebacterium efficiens (strain DSM 44549 / YS-314 / AJ 12310 / JCM 11189 / NBRC 100395).